A 348-amino-acid chain; its full sequence is Putative agmatine deiminase (348 aa).

The Amidino-cysteine intermediate role is filled by Cys335.

It belongs to the agmatine deiminase family.

The enzyme catalyses agmatine + H2O = N-carbamoylputrescine + NH4(+). This Legionella pneumophila subsp. pneumophila (strain Philadelphia 1 / ATCC 33152 / DSM 7513) protein is Putative agmatine deiminase.